Reading from the N-terminus, the 311-residue chain is Cell division protein FtsQ (311 aa).

The disordered stretch occupies residues 1–28 (MTTRSPARPLIARRSTPAPTPAPHDPAP). At 1-46 (MTTRSPARPLIARRSTPAPTPAPHDPAPSRLSYRVTRLWLTPIFRK) the chain is on the cytoplasmic side. A helical transmembrane segment spans residues 47–67 (ALHLGIPVFALFAAVTWYLGD). Topologically, residues 68 to 311 (ETRVAELFEA…AERPDGDTRG (244 aa)) are periplasmic. Positions 91–159 (FRVNVLGIDG…GYLAVRIDER (69 aa)) constitute a POTRA domain.

It belongs to the FtsQ/DivIB family. FtsQ subfamily.

It is found in the cell inner membrane. Essential cell division protein. This chain is Cell division protein FtsQ, found in Jannaschia sp. (strain CCS1).